Consider the following 177-residue polypeptide: Large ribosomal subunit protein uL6 (177 aa).

This sequence belongs to the universal ribosomal protein uL6 family. In terms of assembly, part of the 50S ribosomal subunit.

This protein binds to the 23S rRNA, and is important in its secondary structure. It is located near the subunit interface in the base of the L7/L12 stalk, and near the tRNA binding site of the peptidyltransferase center. This chain is Large ribosomal subunit protein uL6, found in Halorhodospira halophila (strain DSM 244 / SL1) (Ectothiorhodospira halophila (strain DSM 244 / SL1)).